We begin with the raw amino-acid sequence, 325 residues long: Probable cell division protein WhiA (325 aa).

The segment at residues 273–306 (SLEELGALADPPLTKDAVAGRIRRLLALADKRAN) is a DNA-binding region (H-T-H motif).

This sequence belongs to the WhiA family.

In terms of biological role, involved in cell division and chromosome segregation. This chain is Probable cell division protein WhiA, found in Frankia alni (strain DSM 45986 / CECT 9034 / ACN14a).